The chain runs to 73 residues: U-scoloptoxin(15)-Sm2a (73 aa).

Residues 1-20 (MKFYIVFCLFVVLLINFAAA) form the signal peptide. 2 disulfide bridges follow: C39–C66 and C43–C68.

The protein belongs to the scoloptoxin-15 family. As to expression, expressed by the venom gland.

Its subcellular location is the secreted. Activity unknown, even that a lot of targets (Kv, Nav, Cav) have been tested and activities on insects and mice have been tested. In Scolopendra morsitans (Tanzanian blue ringleg centipede), this protein is U-scoloptoxin(15)-Sm2a.